The sequence spans 1466 residues: Retrovirus-related Pol polyprotein from transposon RE1 (1466 aa).

Residues S227 to N270 form a disordered region. A compositionally biased stretch (low complexity) spans R229–N254. The span at S255 to N270 shows a compositional bias: polar residues. A CCHC-type zinc finger spans residues K278 to Q294. D334 serves as the catalytic For protease activity. One can recognise an Integrase catalytic domain in the interval N519 to S682. 2 residues coordinate Mg(2+): D530 and D592. The disordered stretch occupies residues W772–H927. Composition is skewed to low complexity over residues A796–S827 and Q836–S898. Positions P899–L912 are enriched in pro residues. A compositionally biased stretch (polar residues) spans I915–H927. The region spanning N982–M1225 is the Reverse transcriptase Ty1/copia-type domain.

It carries out the reaction DNA(n) + a 2'-deoxyribonucleoside 5'-triphosphate = DNA(n+1) + diphosphate. The chain is Retrovirus-related Pol polyprotein from transposon RE1 (RE1) from Arabidopsis thaliana (Mouse-ear cress).